A 163-amino-acid polypeptide reads, in one-letter code: MSDSPRRLTHVDESGAARMVDVSGKDVTARTATASGRVLVSETVVGLLRGEGVPKGDALGVARVAGIMAAKQTPTLIPLCHPLSISGVSVDLEVTDDPEPSVAIRATVKTTDRTGVEMEALTAVSVAALTVVDMVKAVDKAAVVTDIRVETKTGGKSGDWSRP.

Residues 79 to 81 (LCH) and 118 to 119 (ME) contribute to the substrate site. The active site involves Asp133.

This sequence belongs to the MoaC family. Homohexamer; trimer of dimers.

It carries out the reaction (8S)-3',8-cyclo-7,8-dihydroguanosine 5'-triphosphate = cyclic pyranopterin phosphate + diphosphate. Its pathway is cofactor biosynthesis; molybdopterin biosynthesis. Catalyzes the conversion of (8S)-3',8-cyclo-7,8-dihydroguanosine 5'-triphosphate to cyclic pyranopterin monophosphate (cPMP). The chain is Cyclic pyranopterin monophosphate synthase from Nocardioides sp. (strain ATCC BAA-499 / JS614).